The sequence spans 104 residues: Large ribosomal subunit protein bL21 (104 aa).

This sequence belongs to the bacterial ribosomal protein bL21 family. Part of the 50S ribosomal subunit. Contacts protein L20.

Its function is as follows. This protein binds to 23S rRNA in the presence of protein L20. The chain is Large ribosomal subunit protein bL21 from Nitrosococcus oceani (strain ATCC 19707 / BCRC 17464 / JCM 30415 / NCIMB 11848 / C-107).